A 34-amino-acid polypeptide reads, in one-letter code: uncharacterized protein (34 aa).

This is an uncharacterized protein from Haemophilus influenzae (strain ATCC 51907 / DSM 11121 / KW20 / Rd).